Consider the following 971-residue polypeptide: Translation initiation factor IF-2 (971 aa).

Positions aspartate 48–lysine 63 are enriched in basic and acidic residues. Disordered stretches follow at residues aspartate 48 to isoleucine 86 and aspartate 101 to glutamine 381. The span at glycine 105–alanine 114 shows a compositional bias: low complexity. Over residues glutamate 121–alanine 181 the composition is skewed to basic and acidic residues. Residues alanine 182–threonine 203 are compositionally biased toward low complexity. Over residues aspartate 210–arginine 261 the composition is skewed to basic and acidic residues. Residues proline 277–proline 286 are compositionally biased toward pro residues. Residues alanine 304 to alanine 326 are compositionally biased toward low complexity. Over residues serine 356–lysine 369 the composition is skewed to gly residues. A tr-type G domain is found at proline 471 to lysine 640. Residues glycine 480–threonine 487 are G1. Position 480–487 (glycine 480–threonine 487) interacts with GTP. The tract at residues glycine 505–histidine 509 is G2. Residues aspartate 526–glycine 529 are G3. GTP is bound by residues aspartate 526–histidine 530 and asparagine 580–aspartate 583. Residues asparagine 580–aspartate 583 are G4. The tract at residues serine 616 to lysine 618 is G5.

The protein belongs to the TRAFAC class translation factor GTPase superfamily. Classic translation factor GTPase family. IF-2 subfamily.

It localises to the cytoplasm. One of the essential components for the initiation of protein synthesis. Protects formylmethionyl-tRNA from spontaneous hydrolysis and promotes its binding to the 30S ribosomal subunits. Also involved in the hydrolysis of GTP during the formation of the 70S ribosomal complex. This chain is Translation initiation factor IF-2, found in Burkholderia orbicola (strain MC0-3).